We begin with the raw amino-acid sequence, 239 residues long: Large ribosomal subunit protein uL2 (239 aa).

Residues 200–239 are disordered; sequence VNHPHGGKEHHIGRPSTVSRRAPPGRKVGHIAARRTGRRK. A compositionally biased stretch (basic residues) spans 222–239; that stretch reads PPGRKVGHIAARRTGRRK.

It belongs to the universal ribosomal protein uL2 family. As to quaternary structure, part of the 50S ribosomal subunit. Forms a bridge to the 30S subunit in the 70S ribosome.

Its function is as follows. One of the primary rRNA binding proteins. Required for association of the 30S and 50S subunits to form the 70S ribosome, for tRNA binding and peptide bond formation. It has been suggested to have peptidyltransferase activity; this is somewhat controversial. Makes several contacts with the 16S rRNA in the 70S ribosome. The protein is Large ribosomal subunit protein uL2 of Thermococcus gammatolerans (strain DSM 15229 / JCM 11827 / EJ3).